Here is a 726-residue protein sequence, read N- to C-terminus: Cyclic nucleotide-gated ion channel 2 (726 aa).

Residues 1–127 (MPSHPNFIFR…SKRVQRWNRA (127 aa)) are Cytoplasmic-facing. Positions 26–46 (IDENSNLQINGGDSSSSGSDE) are disordered. The segment covering 36 to 45 (GGDSSSSGSD) has biased composition (low complexity). Residues 128–148 (LLLARGMALAVDPLFFYALSI) form a helical membrane-spanning segment. Residues 149–162 (GRTTGPACLYMDGA) are Extracellular-facing. The helical transmembrane segment at 163–183 (FAAVVTVLRTCLDAVHLWHVW) threads the bilayer. Over 184 to 219 (LQFRLAYVSRESLVVGCGKLVWDPRAIASHYARSLT) the chain is Cytoplasmic. The helical transmembrane segment at 220 to 240 (GFWFDVIVILPVPQAVFWLVV) threads the bilayer. Over 241–254 (PKLIREEKVKLIMT) the chain is Extracellular. Residues 255 to 275 (ILLLIFLFQFLPKIYHCICLM) form a helical membrane-spanning segment. At 276–282 (RRMQKVT) the chain is on the cytoplasmic side. A helical transmembrane segment spans residues 283–303 (GYIFGTIWWGFALNLIAYFIA). At 304–424 (SHVAGGCWYV…ANDLEPTSNW (121 aa)) the chain is on the extracellular side. The helical transmembrane segment at 425–445 (LEVIFSIVMVLSGLLLFTLLI) threads the bilayer. Over 446-726 (GNIQVFLHAV…MSIRPHDHLE (281 aa)) the chain is Cytoplasmic. Residues 531 to 661 (LFRG…ARYY) and aspartate 600 contribute to the a nucleoside 3',5'-cyclic phosphate site. Residues 645–661 (FRYKFANERLKRTARYY) are calmodulin-binding. Positions 666-695 (RTWAAVNIQMAWRRRRKRTRGENIGGSMSP) constitute an IQ domain.

The protein belongs to the cyclic nucleotide-gated cation channel (TC 1.A.1.5) family. In terms of assembly, homotetramer or heterotetramer (Potential). Binds calmodulin-1/4 with a higher affinity than calmodulin-2/3/5. In terms of tissue distribution, expressed in the whole plant but only weakly in roots. Strongly expressed in the expanded cotyledons of 14-day-old seedlings and detected later in leaves after the transition to flowering. Also detected in flowers during organ senescence and in the dehiscence zone of siliques.

It is found in the cell membrane. Acts as a cyclic nucleotide-gated ion channel. Permeable to potassium and calcium in a cyclic nucleotide-dependent fashion (cAMP or cGMP). Could also transport lithium, cesium and rubium and displays a strong selectivity against sodium. Seems to directly participate in pathogen-induced calcium influx. May function in homeostasis, re-establishing ionic balance after defense action and/or other stimuli. Could mediate the initiation of the developmentally regulated cell death programs. This is Cyclic nucleotide-gated ion channel 2 (CNGC2) from Arabidopsis thaliana (Mouse-ear cress).